The chain runs to 466 residues: Reticulophagy regulator 3 (466 aa).

The Cytoplasmic portion of the chain corresponds to Met-1–Trp-80. A Phosphoserine modification is found at Ser-26. Residues Phe-81–Val-101 traverse the membrane as a helical segment. The Lumenal segment spans residues Cys-102–Lys-168. The helical transmembrane segment at Phe-169–Ile-187 threads the bilayer. Over Pro-188 to Leu-192 the chain is Cytoplasmic. The chain crosses the membrane as a helical span at residues Ser-193–Leu-211. Over Trp-212–Glu-381 the chain is Lumenal. Positions Arg-244–Glu-263 are disordered. Over residues Leu-248 to Asp-259 the composition is skewed to basic and acidic residues. At Thr-254 the chain carries Phosphothreonine. A phosphoserine mark is found at Ser-258 and Ser-260. Position 283 is a phosphothreonine (Thr-283). Ser-285, Ser-288, Ser-293, and Ser-303 each carry phosphoserine. The segment at Ser-285–Ser-335 is disordered. A compositionally biased stretch (polar residues) spans Cys-294 to Thr-310. Phosphothreonine occurs at positions 307 and 310. Phosphoserine is present on residues Ser-313, Ser-320, and Ser-360. Basic and acidic residues predominate over residues Leu-316–Pro-331. The helical transmembrane segment at Leu-382–Val-401 threads the bilayer. Over Ser-402–His-466 the chain is Cytoplasmic. Residues Glu-412–Gly-444 are disordered. Thr-440 is modified (phosphothreonine). Positions Asp-445 to Leu-450 match the LIR motif motif.

It belongs to the RETREG family. Interacts with ATG8 family modifier proteins MAP1LC3A, MAP1LC3B, GABARAPL1 and GABARAPL2. Also interacts with ATG8 family modifier protein GABARAP. Interacts with CANX. Interacts with RTN4 isoform B. In terms of tissue distribution, widely expressed with highest levels in brain, lung, liver, muscle and spleen (protein level). Mainly expressed in the central nervous system and in parenchymatous organs including liver, lung and kidney.

It localises to the endoplasmic reticulum membrane. Functionally, endoplasmic reticulum (ER)-anchored autophagy regulator which exists in an inactive state under basal conditions but is activated following cellular stress. When activated, induces ER fragmentation and mediates ER delivery into lysosomes through sequestration into autophagosomes via interaction with ATG8 family proteins. Promotes ER membrane curvature and ER tubulation required for subsequent ER fragmentation and engulfment into autophagosomes. Required for collagen quality control in a LIR motif-dependent manner. Mediates NRF1-enhanced neurite outgrowth. The chain is Reticulophagy regulator 3 (Retreg3) from Mus musculus (Mouse).